We begin with the raw amino-acid sequence, 173 residues long: Transmembrane protein 240 (173 aa).

2 helical membrane passes run 5 to 25 (ANTM…ACLM) and 90 to 110 (LMLG…MDGV). A Phosphoserine modification is found at serine 169.

The protein resides in the synapse. It is found in the cell membrane. This chain is Transmembrane protein 240 (Tmem240), found in Mus musculus (Mouse).